Consider the following 270-residue polypeptide: Phosphatidylglycerol--prolipoprotein diacylglyceryl transferase (270 aa).

The next 4 helical transmembrane spans lie at 19–39, 53–73, 92–112, and 117–137; these read FPVY…LWLA, FVDL…AYYV, QGGL…IIYA, and ISFW…QAIG. Residue R138 coordinates a 1,2-diacyl-sn-glycero-3-phospho-(1'-sn-glycerol). The next 3 helical transmembrane spans lie at 178 to 198, 206 to 226, and 236 to 256; these read HPTF…LLLL, GELF…VEEL, and LRIA…FIIV.

The protein belongs to the Lgt family.

The protein localises to the cell membrane. The catalysed reaction is L-cysteinyl-[prolipoprotein] + a 1,2-diacyl-sn-glycero-3-phospho-(1'-sn-glycerol) = an S-1,2-diacyl-sn-glyceryl-L-cysteinyl-[prolipoprotein] + sn-glycerol 1-phosphate + H(+). It participates in protein modification; lipoprotein biosynthesis (diacylglyceryl transfer). Its function is as follows. Catalyzes the transfer of the diacylglyceryl group from phosphatidylglycerol to the sulfhydryl group of the N-terminal cysteine of a prolipoprotein, the first step in the formation of mature lipoproteins. The protein is Phosphatidylglycerol--prolipoprotein diacylglyceryl transferase of Bacillus cytotoxicus (strain DSM 22905 / CIP 110041 / 391-98 / NVH 391-98).